The primary structure comprises 288 residues: Bifunctional protein FolD (288 aa).

NADP(+)-binding positions include 166–168 and Ile-232; that span reads GAS.

This sequence belongs to the tetrahydrofolate dehydrogenase/cyclohydrolase family. Homodimer.

The enzyme catalyses (6R)-5,10-methylene-5,6,7,8-tetrahydrofolate + NADP(+) = (6R)-5,10-methenyltetrahydrofolate + NADPH. It carries out the reaction (6R)-5,10-methenyltetrahydrofolate + H2O = (6R)-10-formyltetrahydrofolate + H(+). It participates in one-carbon metabolism; tetrahydrofolate interconversion. Functionally, catalyzes the oxidation of 5,10-methylenetetrahydrofolate to 5,10-methenyltetrahydrofolate and then the hydrolysis of 5,10-methenyltetrahydrofolate to 10-formyltetrahydrofolate. In Escherichia coli O139:H28 (strain E24377A / ETEC), this protein is Bifunctional protein FolD.